A 171-amino-acid polypeptide reads, in one-letter code: Protein-export protein SecB (171 aa).

This sequence belongs to the SecB family. Homotetramer, a dimer of dimers. One homotetramer interacts with 1 SecA dimer.

It localises to the cytoplasm. One of the proteins required for the normal export of preproteins out of the cell cytoplasm. It is a molecular chaperone that binds to a subset of precursor proteins, maintaining them in a translocation-competent state. It also specifically binds to its receptor SecA. In Gluconacetobacter diazotrophicus (strain ATCC 49037 / DSM 5601 / CCUG 37298 / CIP 103539 / LMG 7603 / PAl5), this protein is Protein-export protein SecB.